Consider the following 155-residue polypeptide: Protein-export protein SecB 1 (155 aa).

It belongs to the SecB family. As to quaternary structure, homotetramer, a dimer of dimers. One homotetramer interacts with 1 SecA dimer.

It is found in the cytoplasm. In terms of biological role, one of the proteins required for the normal export of preproteins out of the cell cytoplasm. It is a molecular chaperone that binds to a subset of precursor proteins, maintaining them in a translocation-competent state. It also specifically binds to its receptor SecA. This Polaromonas naphthalenivorans (strain CJ2) protein is Protein-export protein SecB 1.